The following is a 117-amino-acid chain: Protein Wnt-10b (117 aa).

Serine 1 carries O-palmitoleoyl serine; by PORCN lipidation. Residues cysteine 83 and cysteine 98 are joined by a disulfide bond. Residue asparagine 84 is glycosylated (N-linked (GlcNAc...) asparagine).

This sequence belongs to the Wnt family. Post-translationally, palmitoleoylation is required for efficient binding to frizzled receptors. Depalmitoleoylation leads to Wnt signaling pathway inhibition.

The protein localises to the secreted. Its subcellular location is the extracellular space. It localises to the extracellular matrix. In terms of biological role, member of the Wnt ligand gene family that encodes for secreted proteins, which activate the Wnt signaling cascade. Involved in neurogenesis. Performs a partially redundant function with wnt1 in the formation of the midbrain-hindbrain boundary (MHB) organizer. This is Protein Wnt-10b (WNT-10B) from Plethodon jordani (Red-cheeked salamander).